Consider the following 559-residue polypeptide: 2-isopropylmalate synthase (559 aa).

The Pyruvate carboxyltransferase domain occupies 30-304 (PLWAAVDLRD…DPGIDFSRMK (275 aa)). Residues Asp39, His243, His245, and Asn279 each coordinate Mg(2+). Positions 436–559 (VPMGWVLRSY…ETSEQLIANS (124 aa)) are regulatory domain.

Belongs to the alpha-IPM synthase/homocitrate synthase family. LeuA type 2 subfamily. Homodimer. The cofactor is Mg(2+).

The protein resides in the cytoplasm. It catalyses the reaction 3-methyl-2-oxobutanoate + acetyl-CoA + H2O = (2S)-2-isopropylmalate + CoA + H(+). It participates in amino-acid biosynthesis; L-leucine biosynthesis; L-leucine from 3-methyl-2-oxobutanoate: step 1/4. Catalyzes the condensation of the acetyl group of acetyl-CoA with 3-methyl-2-oxobutanoate (2-ketoisovalerate) to form 3-carboxy-3-hydroxy-4-methylpentanoate (2-isopropylmalate). The chain is 2-isopropylmalate synthase from Alcanivorax borkumensis (strain ATCC 700651 / DSM 11573 / NCIMB 13689 / SK2).